We begin with the raw amino-acid sequence, 123 residues long: Protein TraJ (123 aa).

Monomer.

It is found in the cytoplasm. In terms of biological role, transfer of plasmid RP4 during bacterial conjugation requires the plasmid-encoded TraJ protein, which binds to a 19-base pair invert sequence repetition within the transfer origin. TraJ protein is bound to only one side of the DNA helix. This nucleoprotein structure is the initial complex in the pathway to assemble a functional relaxosome. The chain is Protein TraJ (traJ) from Escherichia coli.